A 187-amino-acid chain; its full sequence is Protein TfaD (187 aa).

The protein in the C-terminal section; belongs to the tfa family.

This chain is Protein TfaD (tfaD), found in Escherichia coli (strain K12).